The chain runs to 372 residues: Serine/threonine-protein kinase 17B (372 aa).

One can recognise a Protein kinase domain in the interval 33-293; that stretch reads ILTSKELGRG…AEICLSHSWL (261 aa). Residues 39 to 47 and Lys-62 each bind ATP; that span reads LGRGKFAVV. Catalysis depends on Asp-158, which acts as the Proton acceptor. Residues 305 to 362 form a disordered region; sequence EETSSSSQTQDHSVRSSEDKTSKSSCNGTCGDREDKENIPEDSSMVSKRFRFDDSLPN. Over residues 316-326 the composition is skewed to basic and acidic residues; the sequence is HSVRSSEDKTS.

This sequence belongs to the protein kinase superfamily. CAMK Ser/Thr protein kinase family. DAP kinase subfamily. Interacts with CHP1; the interaction induces CHP1 to translocate from the Golgi to the nucleus. Autophosphorylated. In terms of tissue distribution, highly expressed in placenta, lung, pancreas. Lower levels in heart, brain, liver, skeletal muscle and kidney.

It localises to the nucleus. The protein resides in the cell membrane. The protein localises to the endoplasmic reticulum-Golgi intermediate compartment. It catalyses the reaction L-seryl-[protein] + ATP = O-phospho-L-seryl-[protein] + ADP + H(+). It carries out the reaction L-threonyl-[protein] + ATP = O-phospho-L-threonyl-[protein] + ADP + H(+). In terms of biological role, phosphorylates myosin light chains. Acts as a positive regulator of apoptosis. The sequence is that of Serine/threonine-protein kinase 17B (STK17B) from Homo sapiens (Human).